Consider the following 438-residue polypeptide: Asparagine--tRNA ligase (438 aa).

This sequence belongs to the class-II aminoacyl-tRNA synthetase family. As to quaternary structure, homodimer.

It is found in the cytoplasm. The enzyme catalyses tRNA(Asn) + L-asparagine + ATP = L-asparaginyl-tRNA(Asn) + AMP + diphosphate + H(+). The sequence is that of Asparagine--tRNA ligase from Thermus thermophilus (strain ATCC BAA-163 / DSM 7039 / HB27).